The sequence spans 1000 residues: SEC23-interacting protein (1000 aa).

Residues 1 to 367 (MAERKPNGGS…YTEEFSEKLE (367 aa)) form an interaction with SEC23A region. Residues 133-252 (FSPSISKAQP…QQVPARPGAP (120 aa)) are disordered. The segment covering 154–167 (SYLPSQPSSLPPSY) has biased composition (low complexity). Residues 207–218 (PGPPAHPPPSGP) show a composition bias toward pro residues. Low complexity predominate over residues 235 to 246 (SSVQSPAQQQVP). Residues 644-707 (KEVLTLQETL…NFVEHKAAKL (64 aa)) form the SAM domain. A disordered region spans residues 716–748 (AVAATSTKGQEQSAQKTKDMASLPSESNEPKRK). A phosphoserine mark is found at serine 737 and serine 926. A DDHD domain is found at 779 to 989 (LDFEPEIFFA…ALLLLKEIYR (211 aa)).

This sequence belongs to the PA-PLA1 family. In terms of assembly, interacts with SEC23A. In terms of tissue distribution, ubiquitously expressed with stronger levels detected in heart, liver and skeletal muscle.

Its subcellular location is the cytoplasmic vesicle. The protein resides in the COPII-coated vesicle membrane. It localises to the endoplasmic reticulum. Its function is as follows. Plays a role in the organization of endoplasmic reticulum exit sites. Specifically binds to phosphatidylinositol 3-phosphate (PI(3)P), phosphatidylinositol 4-phosphate (PI(4)P) and phosphatidylinositol 5-phosphate (PI(5)P). The sequence is that of SEC23-interacting protein (SEC23IP) from Homo sapiens (Human).